The primary structure comprises 31 residues: Ranatuerin-2 (31 aa).

Residues cysteine 23 and cysteine 28 are joined by a disulfide bond.

The protein belongs to the frog skin active peptide (FSAP) family. Ranatuerin subfamily. Expressed by the skin glands.

Its subcellular location is the secreted. In terms of biological role, antibacterial activity against Gram-positive bacterium S.aureus (MIC=60 uM). Shows no detectable hemolytic activity towards human erythrocytes. The chain is Ranatuerin-2 from Aquarana catesbeiana (American bullfrog).